Here is a 354-residue protein sequence, read N- to C-terminus: MLKEKLHPFIQRYNEINELLSSPEITQDIKKMTALSKEQSEIEPIVEKAKEYMNILEAIEENRSLIEDEELGELAKEELKELEPKKEQLEEEIKVLLISKDPNDEKDIYLEIRAGTGGEEAALFASDLFKAYARYAEKKGWRVEIVSSSESDSGGYKEIIAKIKGQGVYSRLKYEAGTHRVQRVPETESQGRIHTSAVTVAIMPEVDDVDVEINPNDLKIDVYRSSGHGGQSVNTTDSAVRITHIPTGIVVAMQDEKSQHKNKEKALKILKARIFEKRMREQQEALAKDRKEQVGSGDRSERIRTYNFPQNRVTDHRIGLTLYKLEEVMQGDLDQIIEPLIAHYQAQKIQEAGL.

Gln-231 bears the N5-methylglutamine mark. The segment covering 284–304 (EALAKDRKEQVGSGDRSERIR) has biased composition (basic and acidic residues). The tract at residues 284-308 (EALAKDRKEQVGSGDRSERIRTYNF) is disordered.

This sequence belongs to the prokaryotic/mitochondrial release factor family. Methylated by PrmC. Methylation increases the termination efficiency of RF1.

Its subcellular location is the cytoplasm. Functionally, peptide chain release factor 1 directs the termination of translation in response to the peptide chain termination codons UAG and UAA. In Nitratiruptor sp. (strain SB155-2), this protein is Peptide chain release factor 1.